We begin with the raw amino-acid sequence, 361 residues long: 5-formaminoimidazole-4-carboxamide-1-(beta)-D-ribofuranosyl 5'-monophosphate synthetase (361 aa).

5-amino-1-(5-phospho-beta-D-ribosyl)imidazole-4-carboxamide is bound by residues histidine 27 and serine 94. In terms of domain architecture, ATP-grasp spans 116-348; it reads RAILRWEAER…MGQRIAKEIK (233 aa). ATP-binding positions include 146–208 and glutamate 230; that span reads PDDI…ANYC. Asparagine 258 is a 5-amino-1-(5-phospho-beta-D-ribosyl)imidazole-4-carboxamide binding site. Residues glutamine 297 and glutamate 310 each coordinate Mg(2+).

This sequence belongs to the phosphohexose mutase family. Mg(2+) serves as cofactor. Mn(2+) is required as a cofactor.

The catalysed reaction is 5-amino-1-(5-phospho-beta-D-ribosyl)imidazole-4-carboxamide + formate + ATP = 5-formamido-1-(5-phospho-D-ribosyl)imidazole-4-carboxamide + ADP + phosphate. It functions in the pathway purine metabolism; IMP biosynthesis via de novo pathway; 5-formamido-1-(5-phospho-D-ribosyl)imidazole-4-carboxamide from 5-amino-1-(5-phospho-D-ribosyl)imidazole-4-carboxamide (formate route): step 1/1. Its function is as follows. Catalyzes the ATP- and formate-dependent formylation of 5-aminoimidazole-4-carboxamide-1-beta-d-ribofuranosyl 5'-monophosphate (AICAR) to 5-formaminoimidazole-4-carboxamide-1-beta-d-ribofuranosyl 5'-monophosphate (FAICAR) in the absence of folates. This Methanococcus maripaludis (strain C5 / ATCC BAA-1333) protein is 5-formaminoimidazole-4-carboxamide-1-(beta)-D-ribofuranosyl 5'-monophosphate synthetase.